The primary structure comprises 1041 residues: Toll-like receptor 8 (1041 aa).

The N-terminal stretch at 1–26 (MENMFLQSSMLTCIFLLISGSCELCA) is a signal peptide. The Extracellular segment spans residues 27 to 827 (EENFSRSYPC…ELTTCVSDVT (801 aa)). 5 N-linked (GlcNAc...) asparagine glycosylation sites follow: Asn-29, Asn-42, Asn-80, Asn-88, and Asn-115. A disulfide bridge connects residues Cys-36 and Cys-49. 6 LRR repeats span residues 126–147 (NLRE…LPES), 148–168 (LTEL…GISR), 171–193 (NLKN…TNIE), 202–223 (NLEL…LPSS), 224–244 (LRKL…DFKG), and 247–268 (NLTL…FPCV). Asn-160 carries an N-linked (GlcNAc...) asparagine glycan. A disulfide bridge connects residues Cys-181 and Cys-187. Asn-247 is a glycosylation site (N-linked (GlcNAc...) asparagine). Cystine bridges form between Cys-257–Cys-270 and Cys-260–Cys-267. N-linked (GlcNAc...) asparagine glycosylation is found at Asn-285 and Asn-293. LRR repeat units lie at residues 288 to 309 (QLRY…WFKN), 312 to 334 (HLKV…AFLT), and 338 to 360 (RLEI…INIS). Residues Asn-358 and Asn-362 are each glycosylated (N-linked (GlcNAc...) asparagine). LRR repeat units follow at residues 368–389 (SLRA…DFQP), 395–416 (NLST…LFQN), and 419–440 (NLEI…TRQS). Asn-395 and Asn-416 each carry an N-linked (GlcNAc...) asparagine glycan. N-linked (GlcNAc...) asparagine glycosylation occurs at Asn-443. Cysteines 479 and 509 form a disulfide. LRR repeat units follow at residues 482–503 (YGKA…QFEN), 506–527 (DIAC…TEFS), 531–551 (HVKY…SALT), and 555–577 (DLEV…THHL). N-linked (GlcNAc...) asparagine glycans are attached at residues Asn-511 and Asn-546. N-linked (GlcNAc...) asparagine glycosylation is found at Asn-582 and Asn-590. LRR repeat units follow at residues 585-606 (NLKV…YNLE), 609-630 (SLVE…DDNR), 640-661 (NLTR…AFLN), 665-685 (SLTE…TLLQ), 689-710 (RLEL…LSDF), 713-734 (SLRT…FLSE), and 737-758 (SLKH…ALET). N-linked (GlcNAc...) asparagine glycosylation is found at Asn-640 and Asn-680. N-linked (GlcNAc...) asparagine glycosylation occurs at Asn-752. One can recognise an LRRCT domain in the interval 772–824 (NPFECTCDIGDFRRWMDEHLNVKIPRLVDVICASPGDQRGKSIVSLELTTCVS). A disulfide bridge links Cys-776 with Cys-803. The helical transmembrane segment at 828–848 (AVILFFFTFFITTMVMLAALA) threads the bilayer. The Cytoplasmic portion of the chain corresponds to 849–1041 (HHLFYWDVWF…NMYVDSIKQY (193 aa)). One can recognise a TIR domain in the interval 878–1022 (TFYDAYISYD…LFWQTLRNVV (145 aa)).

It belongs to the Toll-like receptor family. In terms of assembly, homodimer. Interacts with MYD88 via their respective TIR domains. Interacts with UNC93B1. Interacts with BTK. Interacts with SMPDL3B. Ubiquitinated by RNF216; leading to degradation by the proteasome. Post-translationally, proteolytic processing occurs in monocytes and monocyte-derived macrophages by both furin-like proprotein convertase and cathepsins. The cleavage is necessary for dimer formation and subsequent activation. Expressed in myeloid dendritic cells, monocytes, and monocyte-derived dendritic cells.

The protein localises to the endosome membrane. Activated by RNAs having enough uridines. In terms of biological role, endosomal receptor that plays a key role in innate and adaptive immunity. Controls host immune response against pathogens through recognition of RNA degradation products specific to microorganisms that are initially processed by RNASET2. Recognizes GU-rich single-stranded RNA (GU-rich RNA) derived from SARS-CoV-2, SARS-CoV-1 and HIV-1 viruses. Upon binding to agonists, undergoes dimerization that brings TIR domains from the two molecules into direct contact, leading to the recruitment of TIR-containing downstream adapter MYD88 through homotypic interaction. In turn, the Myddosome signaling complex is formed involving IRAK4, IRAK1, TRAF6, TRAF3 leading to activation of downstream transcription factors NF-kappa-B and IRF7 to induce pro-inflammatory cytokines and interferons, respectively. In Homo sapiens (Human), this protein is Toll-like receptor 8.